Consider the following 434-residue polypeptide: uncharacterized protein (434 aa).

5 helical membrane passes run 27–47 (IFLL…QSVI), 64–84 (FYLS…FVNW), 244–264 (IILA…ATVL), 289–309 (VPVN…PSLL), and 387–407 (LILT…GAVF).

This sequence belongs to the CbiQ family.

Its subcellular location is the cell membrane. This is an uncharacterized protein from Mycoplasma pneumoniae (strain ATCC 29342 / M129 / Subtype 1) (Mycoplasmoides pneumoniae).